The sequence spans 311 residues: Heme A synthase (311 aa).

At 1–6 (MQRFIK) the chain is on the cytoplasmic side. A helical membrane pass occupies residues 7 to 27 (WLAVITSLDLLIVLLGGALVT). The Extracellular segment spans residues 28–62 (KTGSGQGCGKSWPLCNGEFVPSNLSMETIIELSHR). A disulfide bond links C35 and C42. The active site involves E58. H61 is a heme o binding site. The chain crosses the membrane as a helical span at residues 63–83 (LTSGSAGILVTLLCILSWKYY). The Cytoplasmic portion of the chain corresponds to 84–91 (KHVRETKT). The helical transmembrane segment at 92-112 (LAILSFVFLVAQALMGAAAVV) threads the bilayer. Residues 113–121 (WGQMPAVLA) lie on the Extracellular side of the membrane. A helical transmembrane segment spans residues 122–142 (IHFGISLISFASVILLTCLIF). H123 is a binding site for heme o. Topologically, residues 143 to 159 (EIDQKFDARSLIMDKKM) are cytoplasmic. A helical membrane pass occupies residues 160–180 (KFHIYGVTIYSYIVVYTGALV). Over 181–211 (RHERASLACPDFPLCSKNRPMPTQLHEWVQM) the chain is Extracellular. Residues C189 and C195 are joined by a disulfide bond. Residues 212–232 (GHRVAAMLIFAWILYAMILAI) form a helical membrane-spanning segment. H213 is a binding site for heme b. Residues 233–243 (RHYKQQPVVYW) lie on the Cytoplasmic side of the membrane. A helical transmembrane segment spans residues 244–264 (GWIISFILVTLQAVVGVLVVF). At 265-271 (TNASLAM) the chain is on the extracellular side. A helical membrane pass occupies residues 272 to 292 (ALLHSLFISCLFAVLCYLVML). Position 275 (H275) interacts with heme b. The Cytoplasmic portion of the chain corresponds to 293–311 (GTRSKVNAKEAELTSKQTK).

It belongs to the COX15/CtaA family. Type 1 subfamily. In terms of assembly, interacts with CtaB. Requires heme b as cofactor.

The protein resides in the cell membrane. It carries out the reaction Fe(II)-heme o + 2 A + H2O = Fe(II)-heme a + 2 AH2. The protein operates within porphyrin-containing compound metabolism; heme A biosynthesis; heme A from heme O: step 1/1. Catalyzes the conversion of heme O to heme A by two successive hydroxylations of the methyl group at C8. The first hydroxylation forms heme I, the second hydroxylation results in an unstable dihydroxymethyl group, which spontaneously dehydrates, resulting in the formyl group of heme A. The sequence is that of Heme A synthase from Bacillus cereus (strain ATCC 14579 / DSM 31 / CCUG 7414 / JCM 2152 / NBRC 15305 / NCIMB 9373 / NCTC 2599 / NRRL B-3711).